The sequence spans 172 residues: Adenine phosphoribosyltransferase (172 aa).

This sequence belongs to the purine/pyrimidine phosphoribosyltransferase family. As to quaternary structure, homodimer.

The protein resides in the cytoplasm. It catalyses the reaction AMP + diphosphate = 5-phospho-alpha-D-ribose 1-diphosphate + adenine. The protein operates within purine metabolism; AMP biosynthesis via salvage pathway; AMP from adenine: step 1/1. Functionally, catalyzes a salvage reaction resulting in the formation of AMP, that is energically less costly than de novo synthesis. The sequence is that of Adenine phosphoribosyltransferase from Microcystis aeruginosa (strain NIES-843 / IAM M-2473).